Reading from the N-terminus, the 163-residue chain is Choriogonadotropin subunit beta (163 aa).

A signal peptide spans 1 to 20; the sequence is MEMLQGLLLCLLLSTGGAWA. 6 disulfide bridges follow: Cys-29–Cys-76, Cys-43–Cys-91, Cys-46–Cys-129, Cys-54–Cys-107, Cys-58–Cys-109, and Cys-112–Cys-119. Asn-50 carries N-linked (GlcNAc...) asparagine glycosylation. A glycan (N-linked (GlcNAc...) asparagine) is linked at Asn-124. Residues 135-151 show a composition bias toward polar residues; the sequence is QDSSSNVPPSNLTSPSQ. The segment at 135–163 is disordered; it reads QDSSSNVPPSNLTSPSQLLEPAVTPLVPQ. Ser-139 carries an O-linked (GalNAc...) serine glycan. Asn-145 is a glycosylation site (N-linked (GlcNAc...) asparagine). An O-linked (GalNAc...) serine glycan is attached at Ser-150.

It belongs to the glycoprotein hormones subunit beta family. Heterodimer of a common alpha chain and a unique beta chain which confers biological specificity to thyrotropin, lutropin, follitropin and gonadotropin.

It is found in the secreted. Functionally, stimulates the ovaries to synthesize the steroids that are essential for the maintenance of pregnancy. This is Choriogonadotropin subunit beta (CGB) from Saimiri boliviensis boliviensis (Bolivian squirrel monkey).